A 908-amino-acid polypeptide reads, in one-letter code: Translation initiation factor IF-2 (908 aa).

Disordered regions lie at residues 122–180 and 203–267; these read PVVE…VDDA and EKAR…AVKK. Residues 132–143 show a composition bias toward acidic residues; that stretch reads VAAEPEVVEAPE. Residues 157–166 show a composition bias toward low complexity; it reads EEPAAPAAPV. Residues 223 to 248 show a composition bias toward basic and acidic residues; the sequence is AKEDARPTKHVEDLAKLKKPHDKKDE. Residues 256-267 are compositionally biased toward basic residues; it reads KHNKKAGKAVKK. Residues 409-578 form the tr-type G domain; the sequence is PRAPIVTVMG…ALQAELLELS (170 aa). A G1 region spans residues 418–425; that stretch reads GHVDHGKT. Position 418–425 (418–425) interacts with GTP; that stretch reads GHVDHGKT. Residues 443–447 are G2; it reads GITQH. A G3 region spans residues 464–467; that stretch reads DTPG. GTP contacts are provided by residues 464-468 and 518-521; these read DTPGH and NKMD. The interval 518 to 521 is G4; the sequence is NKMD. The interval 554–556 is G5; sequence SAH.

It belongs to the TRAFAC class translation factor GTPase superfamily. Classic translation factor GTPase family. IF-2 subfamily.

It is found in the cytoplasm. In terms of biological role, one of the essential components for the initiation of protein synthesis. Protects formylmethionyl-tRNA from spontaneous hydrolysis and promotes its binding to the 30S ribosomal subunits. Also involved in the hydrolysis of GTP during the formation of the 70S ribosomal complex. This chain is Translation initiation factor IF-2, found in Saccharophagus degradans (strain 2-40 / ATCC 43961 / DSM 17024).